The sequence spans 331 residues: DNA-directed RNA polymerase subunit alpha (331 aa).

Positions 1 to 223 are alpha N-terminal domain (alpha-NTD); the sequence is MDQKRPQLKA…DELTVFGNVE (223 aa). The alpha C-terminal domain (alpha-CTD) stretch occupies residues 260–331; it reads PYPADLDTPR…LAQFGLALRD (72 aa).

This sequence belongs to the RNA polymerase alpha chain family. Homodimer. The RNAP catalytic core consists of 2 alpha, 1 beta, 1 beta' and 1 omega subunit. When a sigma factor is associated with the core the holoenzyme is formed, which can initiate transcription.

The catalysed reaction is RNA(n) + a ribonucleoside 5'-triphosphate = RNA(n+1) + diphosphate. In terms of biological role, DNA-dependent RNA polymerase catalyzes the transcription of DNA into RNA using the four ribonucleoside triphosphates as substrates. The sequence is that of DNA-directed RNA polymerase subunit alpha from Deinococcus geothermalis (strain DSM 11300 / CIP 105573 / AG-3a).